We begin with the raw amino-acid sequence, 334 residues long: MELHIIFLILGGLLIVLLAGFSIYSARREKSRIFSNTFTTRQPATPIKNIVTDVPATLDPLQYGQNPVPTENESESETGHSVQIQQEVENSLREIKINLPVQETAEYTQTPLNTPIYHNQPAQPTFLQTAPPIEPLTIPTVEPIQPETTSVLEQSLEELERQAAERELDLYSDASVRIELAKNSIQTPIEEVAQPESTVITQNNIITLYVVAPEGQQFDGHYVVQSLEALGFQFGEYQIYHRHQHLGNNDTPVIFSVANMMQPGIFDLNNLDSYATVGLVLFMHLPSEGSDLVNLKLMLKAAESLAEALGGFILNEQRELFNETDRQAYFARVS.

Over 1-2 (ME) the chain is Periplasmic. A helical membrane pass occupies residues 3-23 (LHIIFLILGGLLIVLLAGFSI). Over 24-334 (YSARREKSRI…DRQAYFARVS (311 aa)) the chain is Cytoplasmic.

It belongs to the ZipA family. As to quaternary structure, interacts with FtsZ via their C-terminal domains.

It localises to the cell inner membrane. Essential cell division protein that stabilizes the FtsZ protofilaments by cross-linking them and that serves as a cytoplasmic membrane anchor for the Z ring. Also required for the recruitment to the septal ring of downstream cell division proteins. The sequence is that of Cell division protein ZipA from Haemophilus ducreyi (strain 35000HP / ATCC 700724).